Consider the following 102-residue polypeptide: NADH-quinone oxidoreductase subunit K (102 aa).

Transmembrane regions (helical) follow at residues 6–26 (LTGF…GVLA), 30–50 (ILFQ…AFIA), and 63–83 (MFVL…ALFL).

Belongs to the complex I subunit 4L family. In terms of assembly, NDH-1 is composed of 14 different subunits. Subunits NuoA, H, J, K, L, M, N constitute the membrane sector of the complex.

The protein resides in the cell inner membrane. The catalysed reaction is a quinone + NADH + 5 H(+)(in) = a quinol + NAD(+) + 4 H(+)(out). Functionally, NDH-1 shuttles electrons from NADH, via FMN and iron-sulfur (Fe-S) centers, to quinones in the respiratory chain. The immediate electron acceptor for the enzyme in this species is believed to be ubiquinone. Couples the redox reaction to proton translocation (for every two electrons transferred, four hydrogen ions are translocated across the cytoplasmic membrane), and thus conserves the redox energy in a proton gradient. In Rhodopseudomonas palustris (strain BisA53), this protein is NADH-quinone oxidoreductase subunit K.